The sequence spans 420 residues: Lactosylceramide alpha-2,3-sialyltransferase (420 aa).

The interval 1–39 (MRKKAAGGAERRPLKPRTEAAAAAPAGRAMPSDHSRMKL) is disordered. Residues 1 to 67 (MRKKAAGGAE…MRRPNLLLKD (67 aa)) are Cytoplasmic-facing. Over residues 9–18 (AERRPLKPRT) the composition is skewed to basic and acidic residues. Low complexity predominate over residues 20–29 (AAAAAPAGRA). The helical transmembrane segment at 68–88 (ILKCTLLLFGVWILFYILKLN) threads the bilayer. At 89-420 (HTTEECDMKR…DLSGGIHSEF (332 aa)) the chain is on the lumenal side. A disulfide bond links cysteine 197 and cysteine 355. N-linked (GlcNAc...) asparagine glycosylation occurs at asparagine 238.

This sequence belongs to the glycosyltransferase 29 family.

The protein localises to the golgi apparatus membrane. It catalyses the reaction a beta-D-Gal-(1-&gt;4)-beta-D-Glc-(1&lt;-&gt;1)-Cer(d18:1(4E)) + CMP-N-acetyl-beta-neuraminate = a ganglioside GM3 (d18:1(4E)) + CMP + H(+). The enzyme catalyses ganglioside GA2 (d18:1(4E)/18:0) + CMP-N-acetyl-beta-neuraminate = ganglioside GM2 (d18:1(4E)/18:0) + CMP + H(+). The catalysed reaction is a beta-D-Gal-(1&lt;-&gt;1')-ceramide + CMP-N-acetyl-beta-neuraminate = N-acetyl-alpha-neuraminosyl-(2-&gt;3)-beta-D-galactosyl-(1&lt;-&gt;1')-ceramide + CMP + H(+). It carries out the reaction ganglioside GA1 (d18:1(4E)/18:0) + CMP-N-acetyl-beta-neuraminate = ganglioside GM1 (d18:1(4E)/18:0) + CMP + H(+). Functionally, transfers the sialyl group (N-acetyl-alpha-neuraminyl or NeuAc) from CMP-NeuAc to the non-reducing terminal galactose (Gal) of glycosphingolipids forming gangliosides (important molecules involved in the regulation of multiple cellular processes, including cell proliferation and differentiation, apoptosis, embryogenesis, development, and oncogenesis). Mainly involved in the biosynthesis of ganglioside GM3 but can also use different glycolipids as substrate acceptors such as D-galactosylceramide (GalCer), asialo-GM2 (GA2) and asialo-GM1 (GA1), although less preferentially than beta-D-Gal-(1-&gt;4)-beta-D-Glc-(1&lt;-&gt;1)-Cer (LacCer). In Bos taurus (Bovine), this protein is Lactosylceramide alpha-2,3-sialyltransferase (ST3GAL5).